Here is a 321-residue protein sequence, read N- to C-terminus: Probable 2-oxoglutarate-dependent dioxygenase AOP1.2 (321 aa).

One can recognise a Fe2OG dioxygenase domain in the interval 165–270; sequence TYYLTRLMKY…RYSTGLFSIP (106 aa). Positions 194, 196, and 251 each coordinate Fe cation. Arg261 lines the 2-oxoglutarate pocket.

This sequence belongs to the iron/ascorbate-dependent oxidoreductase family. The cofactor is Fe(2+).

In terms of biological role, probable 2-oxoglutarate-dependent dioxygenase that may be involved in glucosinolates biosynthesis. May play a role in the production of aliphatic glucosinolates. This chain is Probable 2-oxoglutarate-dependent dioxygenase AOP1.2 (AOP1.2), found in Arabidopsis thaliana (Mouse-ear cress).